The sequence spans 328 residues: 7,8-didemethyl-8-hydroxy-5-deazariboflavin synthase (328 aa).

The 242-residue stretch at 1–242 (MTYSRNIFIP…PDVSIQVPPN (242 aa)) folds into the Radical SAM core domain. Residues Cys15, Cys19, and Cys22 each coordinate [4Fe-4S] cluster.

It belongs to the radical SAM superfamily. CofG family. As to quaternary structure, consists of two subunits, CofG and CofH. [4Fe-4S] cluster is required as a cofactor.

The catalysed reaction is 5-amino-5-(4-hydroxybenzyl)-6-(D-ribitylimino)-5,6-dihydrouracil + S-adenosyl-L-methionine = 7,8-didemethyl-8-hydroxy-5-deazariboflavin + 5'-deoxyadenosine + L-methionine + NH4(+) + H(+). It functions in the pathway cofactor biosynthesis; coenzyme F0 biosynthesis. Functionally, catalyzes the radical-mediated synthesis of 7,8-didemethyl-8-hydroxy-5-deazariboflavin from 5-amino-5-(4-hydroxybenzyl)-6-(D-ribitylimino)-5,6-dihydrouracil. The sequence is that of 7,8-didemethyl-8-hydroxy-5-deazariboflavin synthase from Methanothermobacter thermautotrophicus (strain ATCC 29096 / DSM 1053 / JCM 10044 / NBRC 100330 / Delta H) (Methanobacterium thermoautotrophicum).